Reading from the N-terminus, the 426-residue chain is Glutamyl-tRNA reductase (426 aa).

Substrate contacts are provided by residues 50 to 53 (TCNR), Ser108, 113 to 115 (EPQ), and Gln119. Cys51 serves as the catalytic Nucleophile. 188-193 (GAGEMI) is a binding site for NADP(+).

It belongs to the glutamyl-tRNA reductase family. As to quaternary structure, homodimer.

It carries out the reaction (S)-4-amino-5-oxopentanoate + tRNA(Glu) + NADP(+) = L-glutamyl-tRNA(Glu) + NADPH + H(+). It participates in porphyrin-containing compound metabolism; protoporphyrin-IX biosynthesis; 5-aminolevulinate from L-glutamyl-tRNA(Glu): step 1/2. Catalyzes the NADPH-dependent reduction of glutamyl-tRNA(Glu) to glutamate 1-semialdehyde (GSA). This Polaromonas sp. (strain JS666 / ATCC BAA-500) protein is Glutamyl-tRNA reductase.